We begin with the raw amino-acid sequence, 878 residues long: AP-2 complex subunit alpha (878 aa).

The protein belongs to the adaptor complexes large subunit family. As to quaternary structure, adaptor protein complex 2 (AP-2) is a heterotetramer composed of two large adaptins (alpha-type subunit apl3 and beta-type subunit apl1), a medium chain (mu-type subunit apm4) and a small adaptin (sigma-type subunit aps2).

The protein localises to the cell membrane. Its subcellular location is the membrane. It is found in the coated pit. Its function is as follows. Adaptins are components of the adaptor complexes which link clathrin to receptors in coated vesicles. Clathrin-associated protein complexes are believed to interact with the cytoplasmic tails of membrane proteins, leading to their selection and concentration. Alpha adaptin is a subunit of the plasma membrane adaptor. The polypeptide is AP-2 complex subunit alpha (apl3) (Schizosaccharomyces pombe (strain 972 / ATCC 24843) (Fission yeast)).